The chain runs to 262 residues: Small ribosomal subunit protein uS2 (262 aa).

Belongs to the universal ribosomal protein uS2 family.

The polypeptide is Small ribosomal subunit protein uS2 (Borreliella afzelii (strain PKo) (Borrelia afzelii)).